Here is a 320-residue protein sequence, read N- to C-terminus: ATP-dependent 6-phosphofructokinase (320 aa).

Residues G12, 73-74 (RF), and 103-106 (GDGS) each bind ATP. D104 is a Mg(2+) binding site. 126–128 (TID) contacts substrate. D128 serves as the catalytic Proton acceptor. R155 serves as a coordination point for ADP. Residues R163 and 170-172 (MGR) each bind substrate. ADP contacts are provided by residues 186-188 (GCE) and K212. Residues E223, R244, and 250 to 253 (HIQR) each bind substrate.

It belongs to the phosphofructokinase type A (PFKA) family. ATP-dependent PFK group I subfamily. Prokaryotic clade 'B1' sub-subfamily. In terms of assembly, homotetramer. The cofactor is Mg(2+).

The protein resides in the cytoplasm. The catalysed reaction is beta-D-fructose 6-phosphate + ATP = beta-D-fructose 1,6-bisphosphate + ADP + H(+). Its pathway is carbohydrate degradation; glycolysis; D-glyceraldehyde 3-phosphate and glycerone phosphate from D-glucose: step 3/4. Its activity is regulated as follows. Allosterically activated by ADP and other diphosphonucleosides, and allosterically inhibited by phosphoenolpyruvate. Functionally, catalyzes the phosphorylation of D-fructose 6-phosphate to fructose 1,6-bisphosphate by ATP, the first committing step of glycolysis. This Buchnera aphidicola subsp. Cinara cedri (strain Cc) protein is ATP-dependent 6-phosphofructokinase.